The primary structure comprises 741 residues: NAD(P)H-quinone oxidoreductase subunit 5, chloroplastic (741 aa).

Transmembrane regions (helical) follow at residues 9 to 29, 40 to 60, 89 to 109, 122 to 139, 147 to 167, 185 to 205, 219 to 239, 258 to 278, 280 to 300, 396 to 416, 425 to 445, 544 to 564, 603 to 623, and 719 to 739; these read WIIP…LLLV, WAFP…DLSI, IDPL…MVLI, LRFF…LGLV, IHIF…FWFT, GDFG…SLEF, NGVN…GAVA, TPIS…FLVA, LLPI…LGII, TTFL…CFWS, WLYS…TAFY, LFPL…GIPF, IYSV…YGSV, and YLFV…FYFL.

This sequence belongs to the complex I subunit 5 family. As to quaternary structure, NDH is composed of at least 16 different subunits, 5 of which are encoded in the nucleus.

The protein localises to the plastid. It localises to the chloroplast thylakoid membrane. The catalysed reaction is a plastoquinone + NADH + (n+1) H(+)(in) = a plastoquinol + NAD(+) + n H(+)(out). It carries out the reaction a plastoquinone + NADPH + (n+1) H(+)(in) = a plastoquinol + NADP(+) + n H(+)(out). Its function is as follows. NDH shuttles electrons from NAD(P)H:plastoquinone, via FMN and iron-sulfur (Fe-S) centers, to quinones in the photosynthetic chain and possibly in a chloroplast respiratory chain. The immediate electron acceptor for the enzyme in this species is believed to be plastoquinone. Couples the redox reaction to proton translocation, and thus conserves the redox energy in a proton gradient. This Liriodendron tulipifera (Tuliptree) protein is NAD(P)H-quinone oxidoreductase subunit 5, chloroplastic (ndhF).